Consider the following 289-residue polypeptide: Phosphatidylglycerol--prolipoprotein diacylglyceryl transferase (289 aa).

7 helical membrane passes run Ala23–Val43, Leu61–Tyr81, Gly99–His119, Phe125–Leu145, Ser199–Ile219, Gly226–Phe246, and Leu259–Val279. An a 1,2-diacyl-sn-glycero-3-phospho-(1'-sn-glycerol)-binding site is contributed by Arg144.

This sequence belongs to the Lgt family.

It is found in the cell inner membrane. The catalysed reaction is L-cysteinyl-[prolipoprotein] + a 1,2-diacyl-sn-glycero-3-phospho-(1'-sn-glycerol) = an S-1,2-diacyl-sn-glyceryl-L-cysteinyl-[prolipoprotein] + sn-glycerol 1-phosphate + H(+). Its pathway is protein modification; lipoprotein biosynthesis (diacylglyceryl transfer). Its function is as follows. Catalyzes the transfer of the diacylglyceryl group from phosphatidylglycerol to the sulfhydryl group of the N-terminal cysteine of a prolipoprotein, the first step in the formation of mature lipoproteins. The sequence is that of Phosphatidylglycerol--prolipoprotein diacylglyceryl transferase from Pectobacterium atrosepticum (strain SCRI 1043 / ATCC BAA-672) (Erwinia carotovora subsp. atroseptica).